The chain runs to 668 residues: Protein ENTREP3 (668 aa).

The next 3 helical transmembrane spans lie at 34-54 (LLTLGLVQVLLGILVVTFSMV), 67-87 (SCPSWAGFSLAFSGVVGIVSW), and 91-111 (FTLVISFFSLLSVLCVMLSMA). The N-linked (GlcNAc...) asparagine glycan is linked to N160. Residues 174–194 (LFSVCGLTICAAIICTLSAIV) form a helical membrane-spanning segment. S358 and S389 each carry phosphoserine. 3 disordered regions span residues 386 to 419 (FEESPLPRRPPRAARSYSCSAPEAPPPLGAPTAA), 442 to 503 (RVPR…SSDT), and 550 to 570 (SAEKRRPVPTFQKVPLPSGPA). Positions 398–407 (AARSYSCSAP) are enriched in low complexity. At S493 the chain carries Phosphoserine. S574 is modified (phosphoserine). 2 disordered regions span residues 597–620 (KAPDPSGTGAHGHKQVPRSLWGRP) and 645–668 (GRRLERGTRPHSLSLNGGSRETGL). Over residues 655–668 (HSLSLNGGSRETGL) the composition is skewed to polar residues.

This sequence belongs to the ENTREP family. May interact with WWOX. As to expression, widely expressed.

The protein resides in the membrane. This Homo sapiens (Human) protein is Protein ENTREP3.